A 151-amino-acid chain; its full sequence is Small ribosomal subunit protein uS13 (151 aa).

The tract at residues 131-151 (RGQRTKSSFRRGRTVGVKKKQ) is disordered. The segment covering 133-151 (QRTKSSFRRGRTVGVKKKQ) has biased composition (basic residues).

It belongs to the universal ribosomal protein uS13 family. Part of the 30S ribosomal subunit. Forms a loose heterodimer with protein S19. Forms two bridges to the 50S subunit in the 70S ribosome.

Located at the top of the head of the 30S subunit, it contacts several helices of the 16S rRNA. In the 70S ribosome it contacts the 23S rRNA (bridge B1a) and protein L5 of the 50S subunit (bridge B1b), connecting the 2 subunits; these bridges are implicated in subunit movement. This Methanopyrus kandleri (strain AV19 / DSM 6324 / JCM 9639 / NBRC 100938) protein is Small ribosomal subunit protein uS13.